We begin with the raw amino-acid sequence, 317 residues long: MKNNGGTRVVVIGTGFVGASYAFALMNQGIADEIVLIDANESKAIGDAMDFNHGKVFAPKPADIWHGDYDDCRDADLVVICAGANQKPGETRLDLVDKNIAIFRSIVESVMASGFQGLFLVATNPVDILTYATWKFSGLPHERVIGSGTILDTARFRFLLGEYFSVAPQNVHAYIIGEHGDTELPVWSQADIGGVPIRKLVESKGEEAQKELERIFVNVRDAAYQIIEKKGATYYGIAMGLARVTRAILHNENAILTVSAYLDGPYGERDVYIGVPAVINRNGIREVIEIELNDDEKNRFHHSAATLKSVLARFFTR.

NAD(+) contacts are provided by residues V17, D38, K43, Y69, and 83–84; that span reads GA. Q86 and R92 together coordinate substrate. NAD(+) contacts are provided by residues S105, 122-124, and S147; that span reads ATN. 124–127 is a binding site for substrate; that stretch reads NPVD. 152–155 provides a ligand contact to substrate; sequence DTAR. The beta-D-fructose 1,6-bisphosphate site is built by R157 and H172. Catalysis depends on H179, which acts as the Proton acceptor. Phosphotyrosine is present on Y224. A substrate-binding site is contributed by T233.

Belongs to the LDH/MDH superfamily. LDH family. Homotetramer.

Its subcellular location is the cytoplasm. It catalyses the reaction (S)-lactate + NAD(+) = pyruvate + NADH + H(+). It participates in fermentation; pyruvate fermentation to lactate; (S)-lactate from pyruvate: step 1/1. Its activity is regulated as follows. Allosterically activated by fructose 1,6-bisphosphate (FBP). Its function is as follows. Catalyzes the conversion of lactate to pyruvate. The chain is L-lactate dehydrogenase from Bacillus caldolyticus.